The sequence spans 1202 residues: Probable DNA polymerase (1202 aa).

It belongs to the DNA polymerase type-B family.

The protein localises to the mitochondrion. The enzyme catalyses DNA(n) + a 2'-deoxyribonucleoside 5'-triphosphate = DNA(n+1) + diphosphate. This chain is Probable DNA polymerase, found in Ascobolus immersus.